We begin with the raw amino-acid sequence, 307 residues long: Aspartate carbamoyltransferase catalytic subunit (307 aa).

R55 and T56 together coordinate carbamoyl phosphate. An L-aspartate-binding site is contributed by K85. Carbamoyl phosphate is bound by residues R106, H135, and Q138. L-aspartate-binding residues include R168 and R230. Carbamoyl phosphate is bound by residues L268 and P269.

It belongs to the aspartate/ornithine carbamoyltransferase superfamily. ATCase family. In terms of assembly, heterododecamer (2C3:3R2) of six catalytic PyrB chains organized as two trimers (C3), and six regulatory PyrI chains organized as three dimers (R2).

The enzyme catalyses carbamoyl phosphate + L-aspartate = N-carbamoyl-L-aspartate + phosphate + H(+). The protein operates within pyrimidine metabolism; UMP biosynthesis via de novo pathway; (S)-dihydroorotate from bicarbonate: step 2/3. Catalyzes the condensation of carbamoyl phosphate and aspartate to form carbamoyl aspartate and inorganic phosphate, the committed step in the de novo pyrimidine nucleotide biosynthesis pathway. In Photorhabdus laumondii subsp. laumondii (strain DSM 15139 / CIP 105565 / TT01) (Photorhabdus luminescens subsp. laumondii), this protein is Aspartate carbamoyltransferase catalytic subunit.